Here is a 1693-residue protein sequence, read N- to C-terminus: Non-structural polyprotein pORF1 (1693 aa).

Residues 56–240 enclose the Alphavirus-like MT domain; sequence VFRPEVFWNH…HDVSNLRSWI (185 aa). The tract at residues 241–439 is Y-domain; the sequence is RTTKVTGDHP…FYAQCRRWLS (199 aa). An intrachain disulfide couples Cys-434 to Cys-481. Residues 442–509 are protease; it reads FHLDPRVLVF…EAYEGSDVDP (68 aa). A zinc-binding region spans residues 510 to 691; the sequence is AESAISDISG…FSPGHVWESA (182 aa). Zn(2+) is bound by residues His-671, Glu-673, and His-686. The segment at 712-770 is hinge; sequence SSPAQPDLGFISEPSIPSRAATLTPAAPLPPPAPDPSPTPSAPARGEPAPGATARAPAI. Positions 732 to 768 are disordered; the sequence is ATLTPAAPLPPPAPDPSPTPSAPARGEPAPGATARAP. A compositionally biased stretch (pro residues) spans 738–752; it reads APLPPPAPDPSPTPS. A Macro domain is found at 775 to 921; it reads ARHRRLLFTY…LYLPELAARW (147 aa). Positions 934–1082 constitute a (+)RNA virus helicase ATP-binding domain; that stretch reads ITEDVARTAN…RPDLAPTSWW (149 aa). An NTPase/helicase region spans residues 960 to 1204; that stretch reads GCRVTPGVVQ…ISDAIVNNFF (245 aa). 975 to 982 serves as a coordination point for ATP; sequence GVPGSGKS. In terms of domain architecture, (+)RNA virus helicase C-terminal spans 1083-1216; it reads HVTHRCPADV…GGEIGHQRPS (134 aa). Residues 1207–1693 are RNA-directed RNA polymerase; the sequence is GGEIGHQRPS…LTNSILCRVE (487 aa). The RdRp catalytic domain maps to 1454–1565; the sequence is SMVFENDFSE…LCSEYRQSPG (112 aa).

It belongs to the hepevirus non-structural polyprotein family. As to quaternary structure, the protease domain interacts with host EIF2AK4 (via C-terminus); this interaction inhibits dimerization of EIF2AK4 and prevents EIF2AK4-mediated phosphorylation of host EIF2A. The cofactor is Mg(2+). Post-translationally, ORF1 polyprotein does not seem to be processed into distinct enzymatic domains by a viral protease belonging to ORF1, but could be processed by a host serine protease like thrombin.

The protein localises to the host cytoplasm. The protein resides in the host perinuclear region. The catalysed reaction is GTP + S-adenosyl-L-methionine = N(7)-methyl-GTP + S-adenosyl-L-homocysteine. It catalyses the reaction RNA(n) + a ribonucleoside 5'-triphosphate = RNA(n+1) + diphosphate. Putative protease: Inhibited by chymostatin. In terms of biological role, methyltransferase: Displays a capping enzyme activity. This function is necessary since all viral RNAs are synthesized in the cytoplasm, and host capping enzymes are restricted to the nucleus. The enzymatic reaction involves a covalent link between 7-methyl-GMP and the methyltransferase, whereas eukaryotic capping enzymes form a covalent complex only with GMP. Methyltransferase catalyzes transfer of a methyl group from S-adenosylmethionine to GTP and GDP to yield m(7)GTP or m(7)GDP. GDP is a better substrate than GTP. This enzyme also displays guanylyltransferase activity to form a covalent complex, methyltransferase-m(7)GMP, from which 7-methyl-GMP is transferred to the mRNA to create the cap structure. Its function is as follows. Y-domain: Indispensable for virus replication. Functionally, putative protease: The putative protease domain, although necessary for replication of the virus, may not be a protease but rather a structural Zn(2+)-binding domain. Inhibits induction of IFN-beta by MDA5 and RIG-I pathways and down-regulates the expression of MDA5. NTPase/helicase: Multi-functional protein that exhibits NTPase and RNA unwinding activities. Hydrolyzes all NTPs efficiently and unwinds RNA duplexes containing 5' overhangs. Possesses a sequence independent RNA-5'-triphosphatase (RTPase) activity suggestive of its role in forming viral cap structure. Also participates in viral genome replication, RNA translocation and genome packaging/unpackaging. In terms of biological role, RNA-directed RNA polymerase: Plays an essential role in the virus replication. Binds to the 3'-end of the genomic RNA to initiate viral replication. The sequence is that of Non-structural polyprotein pORF1 from Homo sapiens (Human).